The sequence spans 360 residues: Peptide chain release factor 1 (360 aa).

Glutamine 235 is subject to N5-methylglutamine.

This sequence belongs to the prokaryotic/mitochondrial release factor family. Post-translationally, methylated by PrmC. Methylation increases the termination efficiency of RF1.

The protein resides in the cytoplasm. Functionally, peptide chain release factor 1 directs the termination of translation in response to the peptide chain termination codons UAG and UAA. In Mannheimia succiniciproducens (strain KCTC 0769BP / MBEL55E), this protein is Peptide chain release factor 1.